The sequence spans 147 residues: Small ribosomal subunit protein uS12 (147 aa).

It belongs to the universal ribosomal protein uS12 family. As to quaternary structure, part of the 30S ribosomal subunit.

Its function is as follows. With S4 and S5 plays an important role in translational accuracy. Located at the interface of the 30S and 50S subunits. The sequence is that of Small ribosomal subunit protein uS12 from Saccharolobus solfataricus (strain ATCC 35092 / DSM 1617 / JCM 11322 / P2) (Sulfolobus solfataricus).